The primary structure comprises 406 residues: ATPase ASNA1 homolog (406 aa).

21-28 (KGGVGKTT) provides a ligand contact to ATP. Asp-62 is a catalytic residue. The ATP site is built by Glu-300 and Asn-327. Zn(2+) contacts are provided by Cys-339 and Cys-342.

Belongs to the arsA ATPase family. As to quaternary structure, homodimer.

It is found in the cytoplasm. The protein localises to the endoplasmic reticulum. ATPase required for the post-translational delivery of tail-anchored (TA) proteins to the endoplasmic reticulum. Recognizes and selectively binds the transmembrane domain of TA proteins in the cytosol. This complex then targets to the endoplasmic reticulum by membrane-bound receptors, where the tail-anchored protein is released for insertion. This process is regulated by ATP binding and hydrolysis. ATP binding drives the homodimer towards the closed dimer state, facilitating recognition of newly synthesized TA membrane proteins. ATP hydrolysis is required for insertion. Subsequently, the homodimer reverts towards the open dimer state, lowering its affinity for the membrane-bound receptor, and returning it to the cytosol to initiate a new round of targeting. In Leishmania braziliensis, this protein is ATPase ASNA1 homolog.